Consider the following 383-residue polypeptide: WD repeat-containing protein 55 (383 aa).

The span at 1–11 (MDRTCEERPAE) shows a compositional bias: basic and acidic residues. The segment at 1-33 (MDRTCEERPAEDGSDEEDPDSMEAPTRIRDTPE) is disordered. The span at 12–21 (DGSDEEDPDS) shows a compositional bias: acidic residues. Ser14 carries the post-translational modification Phosphoserine. 7 WD repeats span residues 36-75 (VLEAPASGLAFHPARDLLAAGDVDGDVFVFSYSCQEGETK), 82-121 (HHLKACRAVAFSEDGQKLITVSKDKAIHVLDVEQGQLERR), 125-163 (AHGAPINSLLLVDENVLATGDDTGGICLWDQRKEGPLMD), 166-205 (QHEEYIADMALDPAKKLLLTASGDGCLGIFNIKRRRFELL), 208-247 (PQSGDLTSVTLMKWGKKVACGSSEGTIYLFNWNGFGATSD), 250-289 (ALRAESIDCMVPVTESLLCTGSTDGVIRAVNILPNRVVGS), and 293-332 (HTGEPVEELALSHCGRFLASSGHDQRLKFWDMAQLRAVVV). A Phosphoserine modification is found at Ser354. The disordered stretch occupies residues 363–383 (REEGEDSMAQEEKEETGDDSD). Positions 365 to 383 (EGEDSMAQEEKEETGDDSD) are enriched in acidic residues. A Phosphothreonine modification is found at Thr378. Residue Ser382 is modified to Phosphoserine.

This sequence belongs to the WD repeat WDR55 family.

Its subcellular location is the nucleus. It is found in the nucleolus. The protein localises to the cytoplasm. Functionally, nucleolar protein that acts as a modulator of rRNA synthesis. Plays a central role during organogenesis. This Homo sapiens (Human) protein is WD repeat-containing protein 55 (WDR55).